A 287-amino-acid polypeptide reads, in one-letter code: tRNA selenocysteine 1-associated protein 1 (287 aa).

2 RRM domains span residues 3-86 (ASLW…YATY) and 96-175 (YSLF…VAIP).

Belongs to the RRM TRSPAP family. Component of the tRNA(Sec) complex composed at least of EEFSEC, SECISBP2, SEPHS1, SEPSECS, TRNAU1AP and tRNA(Sec). Found in a complex with tRNA(Sec). Interacts with SEPSECS. Associates with mRNP and/or polysomes. Found in a complex with EEFSEC, SECISBP2, TRNAU1AP and tRNA(Sec).

It is found in the nucleus. It localises to the cytoplasm. Its function is as follows. Involved in the early steps of selenocysteine biosynthesis and tRNA(Sec) charging to the later steps resulting in the cotranslational incorporation of selenocysteine into selenoproteins. Stabilizes the SECISBP2, EEFSEC and tRNA(Sec) complex. May be involved in the methylation of tRNA(Sec). Enhances efficiency of selenoproteins synthesis. This Homo sapiens (Human) protein is tRNA selenocysteine 1-associated protein 1 (TRNAU1AP).